A 1116-amino-acid chain; its full sequence is Disease resistance protein RGA5 (1116 aa).

Positions 1–177 (MDAPASFSLG…HHGVSANLVG (177 aa)) are structured coiled coil (CC) domain. The 285-residue stretch at 182 to 466 (KTKLNRWLSD…WSAEGFVSAN (285 aa)) folds into the NB-ARC domain. 9 LRR repeats span residues 608 to 631 (LFQL…ISGL), 633 to 653 (YLET…LVHL), 654 to 675 (PNLL…GCMR), 677 to 701 (LRTL…ELTN), 732 to 755 (LSNL…DISS), 786 to 808 (LHKL…DNLT), 810 to 830 (LPSL…RFIF), 835 to 857 (LPVL…AGAM), and 858 to 882 (PNLQ…LFGI). Residues 935–971 (EEESHPLEKQHHKREKGSSAGHGVLEKESVEDSEKNT) are disordered. Over residues 958 to 971 (VLEKESVEDSEKNT) the composition is skewed to basic and acidic residues. The region spanning 997 to 1066 (RTKIVVKVHM…KCGLAELLMV (70 aa)) is the HMA domain. The interval 1000–1070 (IVVKVHMPCG…AELLMVELVE (71 aa)) is HMA-like domain.

Belongs to the disease resistance NB-LRR family. Forms homodimer or heterodimer with RGA4 through its coiled coil (CC) domain. Interacts with AVR1-Pia and AVR-CO39 through its C-terminal part containing the HMA-like domain. Expressed in leaves.

Its subcellular location is the cytoplasm. In terms of biological role, disease resistance (R) protein that recognizes the AVR-Pia and AVR1-CO39 effector avirulence proteins from M.oryzae. Resistance proteins guard the plant against pathogens that contain an appropriate avirulence protein via an indirect interaction with this avirulence protein. That triggers a defense system including the hypersensitive response, which restricts the pathogen growth. Contribution of RGA4 is required to recognize the effector avirulence proteins AVR-Pia and AVR1-CO39 from M.oryzae. Acts as a repressor of the RGA4-mediated cell death activation. Upon infection, recognition and binding of the AVR effectors relieve the RGA5-mediated repression and triggers the hypersensitive response. Immune response triggered by the RGA4-RGA5 -mediated recognition of AVR1-CO39 confers resistance to X.oryzae pathovars. This is Disease resistance protein RGA5 from Oryza sativa subsp. japonica (Rice).